Reading from the N-terminus, the 249-residue chain is Probable transcriptional regulatory protein mll3945 (249 aa).

The protein belongs to the TACO1 family.

It localises to the cytoplasm. The protein is Probable transcriptional regulatory protein mll3945 of Mesorhizobium japonicum (strain LMG 29417 / CECT 9101 / MAFF 303099) (Mesorhizobium loti (strain MAFF 303099)).